Consider the following 59-residue polypeptide: Zinc finger protein HVO_2753 (59 aa).

4 consecutive short sequence motifs (c(P)XCG motif) follow at residues 12–16, 29–33, 39–43, and 51–55; these read CVSCG, CPDCG, and CSKCR. Positions 29 and 32 each coordinate Zn(2+). Positions 51 and 54 each coordinate Zn(2+).

As to quaternary structure, monomer in solution.

Functionally, zinc-binding protein that binds only one zinc ion. Is required for swarming and biofilm formation. This Haloferax volcanii (strain ATCC 29605 / DSM 3757 / JCM 8879 / NBRC 14742 / NCIMB 2012 / VKM B-1768 / DS2) (Halobacterium volcanii) protein is Zinc finger protein HVO_2753.